The following is a 294-amino-acid chain: Bifunctional protein FolD (294 aa).

Residues 166–168 (GRS), S191, and I232 contribute to the NADP(+) site.

This sequence belongs to the tetrahydrofolate dehydrogenase/cyclohydrolase family. In terms of assembly, homodimer.

It catalyses the reaction (6R)-5,10-methylene-5,6,7,8-tetrahydrofolate + NADP(+) = (6R)-5,10-methenyltetrahydrofolate + NADPH. The catalysed reaction is (6R)-5,10-methenyltetrahydrofolate + H2O = (6R)-10-formyltetrahydrofolate + H(+). The protein operates within one-carbon metabolism; tetrahydrofolate interconversion. In terms of biological role, catalyzes the oxidation of 5,10-methylenetetrahydrofolate to 5,10-methenyltetrahydrofolate and then the hydrolysis of 5,10-methenyltetrahydrofolate to 10-formyltetrahydrofolate. The protein is Bifunctional protein FolD of Afipia carboxidovorans (strain ATCC 49405 / DSM 1227 / KCTC 32145 / OM5) (Oligotropha carboxidovorans).